The following is a 128-amino-acid chain: Large ribosomal subunit protein bL17 (128 aa).

Belongs to the bacterial ribosomal protein bL17 family. Part of the 50S ribosomal subunit. Contacts protein L32.

This is Large ribosomal subunit protein bL17 from Streptococcus suis (strain 98HAH33).